A 106-amino-acid chain; its full sequence is UPF0145 protein Dhaf_3855 (106 aa).

Belongs to the UPF0145 family.

The chain is UPF0145 protein Dhaf_3855 from Desulfitobacterium hafniense (strain DSM 10664 / DCB-2).